Reading from the N-terminus, the 444-residue chain is Phosphomethylpyrimidine synthase (444 aa).

Substrate is bound by residues N80, M109, Y138, H174, 194–196 (SRG), 235–238 (DSLR), and E274. H278 provides a ligand contact to Zn(2+). Y301 contributes to the substrate binding site. H342 provides a ligand contact to Zn(2+). C422, C425, and C430 together coordinate [4Fe-4S] cluster.

This sequence belongs to the ThiC family. As to quaternary structure, homodimer. [4Fe-4S] cluster is required as a cofactor.

The catalysed reaction is 5-amino-1-(5-phospho-beta-D-ribosyl)imidazole + S-adenosyl-L-methionine = 4-amino-2-methyl-5-(phosphooxymethyl)pyrimidine + CO + 5'-deoxyadenosine + formate + L-methionine + 3 H(+). The protein operates within cofactor biosynthesis; thiamine diphosphate biosynthesis. Catalyzes the synthesis of the hydroxymethylpyrimidine phosphate (HMP-P) moiety of thiamine from aminoimidazole ribotide (AIR) in a radical S-adenosyl-L-methionine (SAM)-dependent reaction. The polypeptide is Phosphomethylpyrimidine synthase (Nitratiruptor sp. (strain SB155-2)).